Here is a 670-residue protein sequence, read N- to C-terminus: Zinc finger and BTB domain-containing protein 5 (670 aa).

Residues Cys24–Glu93 enclose the BTB domain. 2 disordered regions span residues Leu158–Gly256 and Glu268–Asp382. The span at Pro170–Gln181 shows a compositional bias: polar residues. At Ser234 the chain carries Phosphoserine. Residue Lys239 forms a Glycyl lysine isopeptide (Lys-Gly) (interchain with G-Cter in SUMO2) linkage. Residues Ser285 to Glu295 are compositionally biased toward polar residues. Glycyl lysine isopeptide (Lys-Gly) (interchain with G-Cter in SUMO2) cross-links involve residues Lys317 and Lys325. Over residues Ala345 to Ala360 the composition is skewed to low complexity. Basic and acidic residues predominate over residues Glu361–Phe374. Ser366 bears the Phosphoserine mark. Residues Lys399 and Lys410 each participate in a glycyl lysine isopeptide (Lys-Gly) (interchain with G-Cter in SUMO2) cross-link. Polar residues predominate over residues Ser414–Asp432. Disordered stretches follow at residues Ser414 to Cys433 and Leu442 to Asp470. Residues Ser444–Ser459 show a composition bias toward low complexity. Residues Lys535, Lys587, and Lys590 each participate in a glycyl lysine isopeptide (Lys-Gly) (interchain with G-Cter in SUMO2) cross-link. A C2H2-type 1 zinc finger spans residues Tyr606–His628. Residues Tyr634–Cys657 form a C2H2-type 2; atypical zinc finger. Residues Lys638 and Lys651 each participate in a glycyl lysine isopeptide (Lys-Gly) (interchain with G-Cter in SUMO2) cross-link.

The protein resides in the nucleus. May be involved in transcriptional regulation. In Mus musculus (Mouse), this protein is Zinc finger and BTB domain-containing protein 5 (Zbtb5).